A 276-amino-acid chain; its full sequence is Transcriptional antiactivator ExsD (276 aa).

As to quaternary structure, can form homotrimer. Interacts with ExsA; this interaction inhibits ExsA activity. Interacts with ExsC; this interaction dissociates the ExsD-ExsA complex.

In terms of biological role, negative regulator of the type III secretion system regulon. Acts by disrupting transcriptional activator ExsA self-association and DNA-binding activity in absence of inducing signals. Upon host cell contact, this interaction is disrupted by the anti-antiactivator protein ExsC leading to ExsA activation. The protein is Transcriptional antiactivator ExsD (exsD) of Pseudomonas aeruginosa (strain ATCC 15692 / DSM 22644 / CIP 104116 / JCM 14847 / LMG 12228 / 1C / PRS 101 / PAO1).